A 136-amino-acid polypeptide reads, in one-letter code: MLQPKRFKFRKMHKGKNRGLSCDNKVNFGSYGLKSIERGRLTARQIEAARRTMSRSVKRQGKIWIRVFPDKPITQKPLEVRMGKGKGNVEYWVALIQPGKILYEIDGISEEECRFAFKLASSKLPIKTIFVSKLVL.

It belongs to the universal ribosomal protein uL16 family. Part of the 50S ribosomal subunit.

Functionally, binds 23S rRNA and is also seen to make contacts with the A and possibly P site tRNAs. This Buchnera aphidicola subsp. Cinara cedri (strain Cc) protein is Large ribosomal subunit protein uL16.